Here is a 426-residue protein sequence, read N- to C-terminus: Tektin-1 (426 aa).

3 coiled-coil regions span residues 21-84 (KNQY…LEQL), 268-307 (LKET…LDQE), and 339-383 (KEVG…ENTI). The tract at residues 396–426 (SNPLRDGGDQGQWARACAPTPSAEDGTSHTD) is disordered.

It belongs to the tektin family. As to quaternary structure, microtubule inner protein component of sperm flagellar doublet microtubules. In terms of processing, ubiquitinated, leading to its degradation. Deubiquitinated by USP16, promoting its stability.

The protein resides in the cytoplasm. The protein localises to the cytoskeleton. Its subcellular location is the cilium axoneme. It is found in the flagellum axoneme. In terms of biological role, microtubule inner protein (MIP) part of the dynein-decorated doublet microtubules (DMTs) in cilia and flagellar axoneme. Forms filamentous polymers in the walls of ciliary and flagellar microtubules. The polypeptide is Tektin-1 (TEKT1) (Canis lupus familiaris (Dog)).